The primary structure comprises 92 residues: Integration host factor subunit beta (92 aa).

This sequence belongs to the bacterial histone-like protein family. In terms of assembly, heterodimer of an alpha and a beta chain.

This protein is one of the two subunits of integration host factor, a specific DNA-binding protein that functions in genetic recombination as well as in transcriptional and translational control. The sequence is that of Integration host factor subunit beta from Azotobacter vinelandii (strain DJ / ATCC BAA-1303).